A 642-amino-acid polypeptide reads, in one-letter code: Nocturnin (642 aa).

The segment at 50–87 (LEDDDKPPQLFSVTDEPPSPNEEDYKPPNHHEDDGKLA) is disordered. Over residues 72 to 87 (EDYKPPNHHEDDGKLA) the composition is skewed to basic and acidic residues. Mg(2+) is bound at residue Glu363. Substrate contacts are provided by residues Glu363, Asn430, 453–456 (HLKA), 491–493 (DFN), and His600. The segment at 611–642 (PPTENGKESGSGSGSDGENETEVEGSKHGSIQ) is disordered.

Belongs to the CCR4/nocturin family. Associates to the CCR4-NOT complex composed of at least Pop2/Caf1-55, Ccr4, Not1, Rga/Not2, and Not3. It depends on Mg(2+) as a cofactor. In terms of tissue distribution, expressed in the head, in the dorsal neurons DN3, a subgroup of clock neurons (at protein level). Ubiquitously expressed in both males and females.

The protein resides in the cytoplasm. It catalyses the reaction NADP(+) + H2O = phosphate + NAD(+). The enzyme catalyses NADPH + H2O = phosphate + NADH. Its function is as follows. Phosphatase which catalyzes the conversion of NADP(+) to NAD(+) and of NADPH to NADH. Shows a small preference for NADPH over NADP(+). Because of its association with the CCR4-NOT complex, has a role in mRNA deadenylation and decay. Required at the pupal stage for proper wing morphogenesis after eclosion. Doesn't have a role in light-mediated behavioral response. In terms of biological role, in dorsal neurons, contributes to the light-mediated behavioral response. The protein is Nocturnin of Drosophila melanogaster (Fruit fly).